A 229-amino-acid chain; its full sequence is LexA repressor (229 aa).

The H-T-H motif DNA-binding region spans 26–46; it reads FDEMKEALDLASKSGIHRLIT. Active-site for autocatalytic cleavage activity residues include Ser-149 and Lys-187.

It belongs to the peptidase S24 family. Homodimer.

The enzyme catalyses Hydrolysis of Ala-|-Gly bond in repressor LexA.. In terms of biological role, represses a number of genes involved in the response to DNA damage (SOS response), including recA and lexA. In the presence of single-stranded DNA, RecA interacts with LexA causing an autocatalytic cleavage which disrupts the DNA-binding part of LexA, leading to derepression of the SOS regulon and eventually DNA repair. This chain is LexA repressor, found in Phenylobacterium zucineum (strain HLK1).